The chain runs to 316 residues: 4-hydroxyphenylacetate decarboxylase activating enzyme (316 aa).

A Radical SAM core domain is found at His20–Ala307. 7 residues coordinate [4Fe-4S] cluster: Cys34, Cys38, Cys41, Cys60, Cys66, Cys69, and Cys105. Residue Trp40–Ala42 coordinates S-adenosyl-L-methionine. The 4Fe-4S ferredoxin-type domain occupies Asn84–Lys115. S-adenosyl-L-methionine-binding positions include Gly144, Asp193 to Lys195, and His267.

It belongs to the organic radical-activating enzymes family. In terms of assembly, monomer. The cofactor is [4Fe-4S] cluster.

The enzyme catalyses glycyl-[protein] + reduced [flavodoxin] + S-adenosyl-L-methionine = glycin-2-yl radical-[protein] + semiquinone [flavodoxin] + 5'-deoxyadenosine + L-methionine + H(+). Catalyzes activation of 4-hydroxyphenylacetate decarboxylase under anaerobic conditions by generation of an organic free radical on a glycine residue, via a homolytic cleavage of S-adenosyl-L-methionine (SAM). The chain is 4-hydroxyphenylacetate decarboxylase activating enzyme from Clostridioides difficile (Peptoclostridium difficile).